Here is a 171-residue protein sequence, read N- to C-terminus: KRAB domain-containing protein 4 (171 aa).

The 72-residue stretch at 8-79 (LTFKDVFVDF…DGGTPVRTCA (72 aa)) folds into the KRAB domain.

In terms of tissue distribution, expressed in brain, ovary, testis, prostate, tonsil, heart, bone marrow, colon, breast and kidney.

This Homo sapiens (Human) protein is KRAB domain-containing protein 4 (KRBOX4).